The chain runs to 439 residues: Serine--tRNA ligase (439 aa).

242–244 lines the L-serine pocket; that stretch reads TAE. 273–275 contributes to the ATP binding site; sequence RQE. Glu296 provides a ligand contact to L-serine. 360–363 is a binding site for ATP; that stretch reads EISS. Ser396 is an L-serine binding site.

The protein belongs to the class-II aminoacyl-tRNA synthetase family. Type-1 seryl-tRNA synthetase subfamily. Homodimer. The tRNA molecule binds across the dimer.

It localises to the cytoplasm. The enzyme catalyses tRNA(Ser) + L-serine + ATP = L-seryl-tRNA(Ser) + AMP + diphosphate + H(+). It carries out the reaction tRNA(Sec) + L-serine + ATP = L-seryl-tRNA(Sec) + AMP + diphosphate + H(+). It participates in aminoacyl-tRNA biosynthesis; selenocysteinyl-tRNA(Sec) biosynthesis; L-seryl-tRNA(Sec) from L-serine and tRNA(Sec): step 1/1. Its function is as follows. Catalyzes the attachment of serine to tRNA(Ser). Is also able to aminoacylate tRNA(Sec) with serine, to form the misacylated tRNA L-seryl-tRNA(Sec), which will be further converted into selenocysteinyl-tRNA(Sec). This Oenococcus oeni (strain ATCC BAA-331 / PSU-1) protein is Serine--tRNA ligase.